A 398-amino-acid polypeptide reads, in one-letter code: Phosphoglycerate kinase (398 aa).

Substrate-binding positions include 23 to 25 (DFN), Arg38, 61 to 64 (HLGK), Arg122, and Arg155. Residues Lys206, Gly297, Glu328, and 354–357 (GGDS) contribute to the ATP site.

Belongs to the phosphoglycerate kinase family. In terms of assembly, monomer.

It is found in the cytoplasm. It carries out the reaction (2R)-3-phosphoglycerate + ATP = (2R)-3-phospho-glyceroyl phosphate + ADP. Its pathway is carbohydrate degradation; glycolysis; pyruvate from D-glyceraldehyde 3-phosphate: step 2/5. The polypeptide is Phosphoglycerate kinase (Clostridium novyi (strain NT)).